A 224-amino-acid chain; its full sequence is uncharacterized protein (224 aa).

A disordered region spans residues 203 to 224; the sequence is ELKKKKKKKIKKPKEIRNQKNV. The span at 204–214 shows a compositional bias: basic residues; the sequence is LKKKKKKKIKK. A compositionally biased stretch (basic and acidic residues) spans 215–224; sequence PKEIRNQKNV.

This is an uncharacterized protein from Mycoplasma genitalium (strain ATCC 33530 / DSM 19775 / NCTC 10195 / G37) (Mycoplasmoides genitalium).